Here is a 117-residue protein sequence, read N- to C-terminus: Putative phosphotransferase enzyme IIB component MG129 (117 aa).

The helical transmembrane segment at 1 to 21 (MKWLLWLGYIFSFGLLYLWIV) threads the bilayer. Positions 42–117 (PFKVKDFVSA…ELKKKIEDEQ (76 aa)) constitute a PTS EIIB type-1 domain.

The protein resides in the membrane. The phosphoenolpyruvate-dependent sugar phosphotransferase system (PTS), a major carbohydrate active -transport system, catalyzes the phosphorylation of incoming sugar substrates concomitant with their translocation across the cell membrane. This is Putative phosphotransferase enzyme IIB component MG129 from Mycoplasma genitalium (strain ATCC 33530 / DSM 19775 / NCTC 10195 / G37) (Mycoplasmoides genitalium).